A 256-amino-acid chain; its full sequence is Calsenilin (256 aa).

Residues 1-30 (MQRAKEVMKVSDGSLLGEPGRTPLSKKEGV) form a disordered region. At Ser14 the chain carries Phosphoserine. Lys26 participates in a covalent cross-link: Glycyl lysine isopeptide (Lys-Gly) (interchain with G-Cter in SUMO1). S-palmitoyl cysteine attachment occurs at residues Cys45 and Cys46. A phosphoserine mark is found at Ser60 and Ser63. An EF-hand 1; degenerate domain is found at 67–123 (LELSAVRHQPEGLDQLQAQTKFTKKELQSLYRGFKNECPTGLVDEDTFKLIYSQFFP). Lys90 participates in a covalent cross-link: Glycyl lysine isopeptide (Lys-Gly) (interchain with G-Cter in SUMO1). EF-hand domains lie at 126 to 161 (DATT…LLRG), 162 to 197 (TVHE…IYDM), and 210 to 245 (APLE…DENI). Residues Asp175, Asn177, Asp179, Tyr181, Glu186, Asp223, Asn225, Asp227, and Glu234 each coordinate Ca(2+). Positions 243 to 256 (ENIMSSMQLFENVI) are interaction with KCND2.

Belongs to the recoverin family. In terms of assembly, binds to DNA as a homomultimer. Dimerization is induced by binding to calcium. Interacts with the C-terminus of PSEN1 and PSEN2 and with PSEN2 CTF subunit. Associates with KCN1. Component of heteromultimeric potassium channels. Identified in potassium channel complexes containing KCND1, KCND2, KCND3, KCNIP1, KCNIP2, KCNIP3, KCNIP4, DPP6 and DPP10. Interacts with KCND2 and KCND3. Palmitoylated. Palmitoylation enhances association with the plasma membrane. In terms of processing, proteolytically cleaved by caspase-3.

It localises to the cytoplasm. Its subcellular location is the cell membrane. The protein resides in the endoplasmic reticulum. The protein localises to the golgi apparatus. It is found in the nucleus. Its function is as follows. Regulatory subunit of Kv4/D (Shal)-type voltage-gated rapidly inactivating A-type potassium channels, such as KCND2/Kv4.2 and KCND3/Kv4.3. Modulates channel expression at the cell membrane, gating characteristics, inactivation kinetics and rate of recovery from inactivation in a calcium-dependent and isoform-specific manner. Functionally, may play a role in the regulation of PSEN2 proteolytic processing and apoptosis. Together with PSEN2 involved in modulation of amyloid-beta formation. In terms of biological role, calcium-dependent transcriptional repressor that binds to the DRE element of genes including PDYN and FOS. Affinity for DNA is reduced upon binding to calcium and enhanced by binding to magnesium. Seems to be involved in nociception. The protein is Calsenilin (KCNIP3) of Bos taurus (Bovine).